Here is a 682-residue protein sequence, read N- to C-terminus: Potassium-transporting ATPase ATP-binding subunit (682 aa).

Transmembrane regions (helical) follow at residues 34 to 54, 62 to 82, 219 to 239, and 254 to 274; these read PVMFIVWIGSLLTTCISIAMA, ALFSAAISGWLWVTVLFANFA, IALTILLIALTIVFLLATATL, and VLVALLVCLIPTTIGGLLSAI. The 4-aspartylphosphate intermediate role is filled by Asp307. ATP contacts are provided by residues Asp344, Glu348, 377 to 384, and Lys395; that span reads FTAQSRMS. Mg(2+)-binding residues include Asp518 and Asp522. 3 helical membrane-spanning segments follow: residues 588 to 608, 616 to 636, and 656 to 676; these read FAIIPAAFAATYPQLNALNIM, AILSAVIFNALIIVFLIPLAL, and IYGLGGLLVPFIGIKVIDLLL.

Belongs to the cation transport ATPase (P-type) (TC 3.A.3) family. Type IA subfamily. In terms of assembly, the system is composed of three essential subunits: KdpA, KdpB and KdpC.

The protein localises to the cell inner membrane. The catalysed reaction is K(+)(out) + ATP + H2O = K(+)(in) + ADP + phosphate + H(+). Part of the high-affinity ATP-driven potassium transport (or Kdp) system, which catalyzes the hydrolysis of ATP coupled with the electrogenic transport of potassium into the cytoplasm. This subunit is responsible for energy coupling to the transport system and for the release of the potassium ions to the cytoplasm. The polypeptide is Potassium-transporting ATPase ATP-binding subunit (Escherichia coli O139:H28 (strain E24377A / ETEC)).